A 504-amino-acid polypeptide reads, in one-letter code: Glycerol kinase (504 aa).

ADP is bound at residue Thr12. Residues Thr12, Thr13, and Ser14 each coordinate ATP. Thr12 is a binding site for sn-glycerol 3-phosphate. Position 16 (Arg16) interacts with ADP. Residues Arg82, Glu83, Tyr134, and Asp249 each contribute to the sn-glycerol 3-phosphate site. Glycerol contacts are provided by Arg82, Glu83, Tyr134, Asp249, and Gln250. ADP is bound by residues Thr271 and Gly315. Positions 271, 315, 319, and 416 each coordinate ATP. 2 residues coordinate ADP: Gly416 and Asn420.

Belongs to the FGGY kinase family.

The catalysed reaction is glycerol + ATP = sn-glycerol 3-phosphate + ADP + H(+). Its pathway is polyol metabolism; glycerol degradation via glycerol kinase pathway; sn-glycerol 3-phosphate from glycerol: step 1/1. Inhibited by fructose 1,6-bisphosphate (FBP). Key enzyme in the regulation of glycerol uptake and metabolism. Catalyzes the phosphorylation of glycerol to yield sn-glycerol 3-phosphate. The sequence is that of Glycerol kinase from Mycobacteroides abscessus (strain ATCC 19977 / DSM 44196 / CCUG 20993 / CIP 104536 / JCM 13569 / NCTC 13031 / TMC 1543 / L948) (Mycobacterium abscessus).